The sequence spans 465 residues: UDP-N-acetylmuramate--L-alanine ligase (465 aa).

114–120 (GAHGKTT) contributes to the ATP binding site.

It belongs to the MurCDEF family.

Its subcellular location is the cytoplasm. The catalysed reaction is UDP-N-acetyl-alpha-D-muramate + L-alanine + ATP = UDP-N-acetyl-alpha-D-muramoyl-L-alanine + ADP + phosphate + H(+). The protein operates within cell wall biogenesis; peptidoglycan biosynthesis. In terms of biological role, cell wall formation. The sequence is that of UDP-N-acetylmuramate--L-alanine ligase from Syntrophomonas wolfei subsp. wolfei (strain DSM 2245B / Goettingen).